Reading from the N-terminus, the 94-residue chain is Anaphase-promoting complex subunit 11 (94 aa).

Residues 35 to 78 (CPQCTSPGDNCPIVWGKCKHIFHAHCIQNWLATSGSQGQCPMDR) form an RING-type zinc finger.

As to quaternary structure, the APC/C is composed of at least 13 subunits: apc1, apc2, nuc2, apc4, apc5, cut9, apc8, apc10, apc11, hcn1, apc13, apc14 and apc15.

Component of the anaphase-promoting complex/cyclosome (APC/C), a cell cycle-regulated E3 ubiquitin-protein ligase complex that controls progression through mitosis and the G1 phase of the cell cycle. The APC/C is thought to confer substrate specificity and, in the presence of ubiquitin-conjugating E2 enzymes, it catalyzes the formation of protein-ubiquitin conjugates that are subsequently degraded by the 26S proteasome. In Schizosaccharomyces pombe (strain 972 / ATCC 24843) (Fission yeast), this protein is Anaphase-promoting complex subunit 11 (apc11).